We begin with the raw amino-acid sequence, 155 residues long: Aspartate carbamoyltransferase regulatory chain (155 aa).

Residues Cys112, Cys117, Cys140, and Cys143 each contribute to the Zn(2+) site.

The protein belongs to the PyrI family. As to quaternary structure, contains catalytic and regulatory chains. Requires Zn(2+) as cofactor.

Its function is as follows. Involved in allosteric regulation of aspartate carbamoyltransferase. This chain is Aspartate carbamoyltransferase regulatory chain, found in Phocaeicola vulgatus (strain ATCC 8482 / DSM 1447 / JCM 5826 / CCUG 4940 / NBRC 14291 / NCTC 11154) (Bacteroides vulgatus).